Consider the following 391-residue polypeptide: Serpin-ZX (391 aa).

Residues 337 to 361 (GTEAAAASAGVIKLRGLLMEEDEID) are RCL. The N-linked (GlcNAc...) asparagine glycan is linked to asparagine 375.

It belongs to the serpin family. Interacts with RD21A. In terms of tissue distribution, expressed in root tips. Expressed in siliques (at protein level).

Its subcellular location is the secreted. The protein resides in the extracellular space. The protein localises to the apoplast. It is found in the cytoplasm. Its function is as follows. Inhibits metacaspase-9 (MC9) cysteine protease. Functions through cleavage of its reactive center loop and covalent binding to MC9. Involved in the control of elicitor-stimulated programmed cell death (PCD). During infection by the necrotrophic fungal pathogen Botrytis cinerea, functions to protect cells by limiting the PCD-promoting protease RD21A activity that is released from the ER body or vacuole to the cytoplasm. Involved in the control of water stress-induced cell death by limiting the pro-death protease RD21A activity that is released from the vacuole to the cytoplasm. This Arabidopsis thaliana (Mouse-ear cress) protein is Serpin-ZX.